A 209-amino-acid chain; its full sequence is Uracil phosphoribosyltransferase (209 aa).

5-phospho-alpha-D-ribose 1-diphosphate is bound by residues Arg-79, Arg-104, and 131-139; that span reads DPMLATGGS. Uracil-binding positions include Ile-194 and 199 to 201; that span reads GDA. Asp-200 serves as a coordination point for 5-phospho-alpha-D-ribose 1-diphosphate.

It belongs to the UPRTase family. Mg(2+) serves as cofactor.

The catalysed reaction is UMP + diphosphate = 5-phospho-alpha-D-ribose 1-diphosphate + uracil. It participates in pyrimidine metabolism; UMP biosynthesis via salvage pathway; UMP from uracil: step 1/1. Its activity is regulated as follows. Allosterically activated by GTP. Functionally, catalyzes the conversion of uracil and 5-phospho-alpha-D-ribose 1-diphosphate (PRPP) to UMP and diphosphate. The protein is Uracil phosphoribosyltransferase of Clostridium novyi (strain NT).